Here is a 128-residue protein sequence, read N- to C-terminus: Sulfurtransferase TusD (128 aa).

Catalysis depends on cysteine 78, which acts as the Cysteine persulfide intermediate.

Belongs to the DsrE/TusD family. Heterohexamer, formed by a dimer of trimers. The hexameric TusBCD complex contains 2 copies each of TusB, TusC and TusD. The TusBCD complex interacts with TusE.

It localises to the cytoplasm. Its function is as follows. Part of a sulfur-relay system required for 2-thiolation of 5-methylaminomethyl-2-thiouridine (mnm(5)s(2)U) at tRNA wobble positions. Accepts sulfur from TusA and transfers it in turn to TusE. This is Sulfurtransferase TusD from Escherichia coli O45:K1 (strain S88 / ExPEC).